The following is a 435-amino-acid chain: Enolase (435 aa).

Gln163 contributes to the (2R)-2-phosphoglycerate binding site. The active-site Proton donor is the Glu205. Mg(2+)-binding residues include Asp243, Glu292, and Asp319. (2R)-2-phosphoglycerate contacts are provided by Lys344, Arg373, Ser374, and Lys395. Lys344 serves as the catalytic Proton acceptor.

It belongs to the enolase family. It depends on Mg(2+) as a cofactor.

It localises to the cytoplasm. Its subcellular location is the secreted. It is found in the cell surface. It catalyses the reaction (2R)-2-phosphoglycerate = phosphoenolpyruvate + H2O. Its pathway is carbohydrate degradation; glycolysis; pyruvate from D-glyceraldehyde 3-phosphate: step 4/5. In terms of biological role, catalyzes the reversible conversion of 2-phosphoglycerate (2-PG) into phosphoenolpyruvate (PEP). It is essential for the degradation of carbohydrates via glycolysis. In Streptococcus equi subsp. zooepidemicus (strain MGCS10565), this protein is Enolase.